Consider the following 507-residue polypeptide: TOM1-like protein 2 (507 aa).

In terms of domain architecture, VHS spans 20–152 (ATDGSLQSED…ELKRRGIEFP (133 aa)). Serine 160 carries the post-translational modification Phosphoserine. At threonine 164 the chain carries Phosphothreonine. Residues 164–200 (TPQRSVPEMDPAATIPRSQTQPRTTAGTYSSPPPASY) are disordered. The region spanning 219-307 (EQIARLRSEL…VFLRYERFER (89 aa)) is the GAT domain. The Clathrin-binding signature appears at 329-334 (NLIDLG). Residues 466-507 (ERAKAAETVPDLPSPPTEAPAPASNTSTRKKPERSDDALFAL) are disordered. The span at 498–507 (ERSDDALFAL) shows a compositional bias: basic and acidic residues.

It belongs to the TOM1 family. In terms of assembly, interacts with clathrin, SRC and TOLLIP. Interacts with MYO6. Ubiquitously expressed. Splicing pattern displays tissue specific variation.

Acts as a MYO6/Myosin VI adapter protein that targets myosin VI to endocytic structures. May also play a role in recruiting clathrin to endosomes. May regulate growth factor-induced mitogenic signaling. The protein is TOM1-like protein 2 (Tom1l2) of Mus musculus (Mouse).